Reading from the N-terminus, the 754-residue chain is Subtilisin-like protease SBT3.12 (754 aa).

A signal peptide spans 1 to 28 (MGIVKGRSRAGLFIGFLFIVNVGFCVFA). A propeptide spans 29–117 (QESSNEERKI…VAPNRKVELQ (89 aa)) (activation peptide). The Inhibitor I9 domain maps to 39–116 (YVVHLGVRRH…SVAPNRKVEL (78 aa)). A Peptidase S8 domain is found at 121-606 (IYDYLGLSPS…AGLVNAERAK (486 aa)). The Charge relay system role is filled by Asp151. Asn206 carries N-linked (GlcNAc...) asparagine glycosylation. His224 functions as the Charge relay system in the catalytic mechanism. N-linked (GlcNAc...) asparagine glycans are attached at residues Asn239 and Asn369. The active-site Charge relay system is Ser537. Residues Asn629 and Asn740 are each glycosylated (N-linked (GlcNAc...) asparagine).

The protein belongs to the peptidase S8 family.

The protein localises to the secreted. The sequence is that of Subtilisin-like protease SBT3.12 from Arabidopsis thaliana (Mouse-ear cress).